A 418-amino-acid chain; its full sequence is Zinc metalloproteinase-disintegrin-like batroxstatin-2 (418 aa).

The Peptidase M12B domain occupies 10–206 (KYVKLVLVAD…DMPQCILEKP (197 aa)). Intrachain disulfides connect Cys121–Cys201, Cys161–Cys185, and Cys163–Cys168. His146 lines the Zn(2+) pocket. Glu147 is a catalytic residue. Zn(2+) is bound by residues His150 and His156. The 86-residue stretch at 214–299 (PPVCGNYFVE…AECTDRFQRN (86 aa)) folds into the Disintegrin domain. Residues Val216, Asn219, Phe221, Glu223, Glu226, and Asp229 each coordinate Ca(2+). 14 disulfide bridges follow: Cys217-Cys246, Cys228-Cys241, Cys230-Cys236, Cys240-Cys263, Cys254-Cys260, Cys259-Cys285, Cys272-Cys292, Cys279-Cys310, Cys303-Cys315, Cys322-Cys372, Cys337-Cys383, Cys350-Cys360, Cys367-Cys409, and Cys403-Cys414. Positions 278–280 (ECD) match the D/ECD-tripeptide motif. 5 residues coordinate Ca(2+): Asp280, Met281, Asp283, Asp294, and Arg295. N-linked (GlcNAc...) asparagine glycosylation occurs at Asn312.

The protein belongs to the venom metalloproteinase (M12B) family. P-III subfamily. P-IIIc sub-subfamily. Homodimer; disulfide-linked. Zn(2+) serves as cofactor. Expressed by the venom gland.

The protein resides in the secreted. Its function is as follows. Snake venom zinc metalloprotease that induces apoptosis in vascular endothelial cells (VEC), without degrading the extracellular matrix (it cannot cleave collagen) or inhibiting adhesion of VEC. Has also fibrinogenolytic and hemorrhagic activities. The sequence is that of Zinc metalloproteinase-disintegrin-like batroxstatin-2 from Bothrops atrox (Barba amarilla).